The following is a 313-amino-acid chain: Ribosomal RNA small subunit methyltransferase H (313 aa).

S-adenosyl-L-methionine contacts are provided by residues 33–35, Glu52, Phe80, Asp101, and Gln108; that span reads AGH.

This sequence belongs to the methyltransferase superfamily. RsmH family.

It localises to the cytoplasm. It carries out the reaction cytidine(1402) in 16S rRNA + S-adenosyl-L-methionine = N(4)-methylcytidine(1402) in 16S rRNA + S-adenosyl-L-homocysteine + H(+). Its function is as follows. Specifically methylates the N4 position of cytidine in position 1402 (C1402) of 16S rRNA. The protein is Ribosomal RNA small subunit methyltransferase H of Spiroplasma kunkelii.